The chain runs to 212 residues: Orotate phosphoribosyltransferase (212 aa).

Residues Arg-94, Lys-98, His-100, and 120-128 (EDLISTGGS) each bind 5-phospho-alpha-D-ribose 1-diphosphate. Ser-124 contacts orotate.

This sequence belongs to the purine/pyrimidine phosphoribosyltransferase family. PyrE subfamily. As to quaternary structure, homodimer. Requires Mg(2+) as cofactor.

The enzyme catalyses orotidine 5'-phosphate + diphosphate = orotate + 5-phospho-alpha-D-ribose 1-diphosphate. It participates in pyrimidine metabolism; UMP biosynthesis via de novo pathway; UMP from orotate: step 1/2. In terms of biological role, catalyzes the transfer of a ribosyl phosphate group from 5-phosphoribose 1-diphosphate to orotate, leading to the formation of orotidine monophosphate (OMP). The protein is Orotate phosphoribosyltransferase of Bacillus pumilus (strain SAFR-032).